A 443-amino-acid chain; its full sequence is Threonine/serine transporter TdcC (443 aa).

The next 11 helical transmembrane spans lie at 22–42, 44–64, 97–117, 140–160, 163–183, 207–227, 261–281, 311–331, 366–386, 389–409, and 423–443; these read TTWT…FFPI, AGFG…PIAF, GVVI…IYGV, FVAL…KDLM, VMSY…LSLI, ILIT…FSPI, MLMV…LSPA, FAIT…FKSF, ISMI…PNIL, IEAM…MYAI, and DNVF…YKLF.

It belongs to the amino acid/polyamine transporter 2 family. SdaC/TdcC subfamily.

It localises to the cell inner membrane. The enzyme catalyses L-threonine(in) + H(+)(in) = L-threonine(out) + H(+)(out). The catalysed reaction is L-serine(in) + H(+)(in) = L-serine(out) + H(+)(out). Functionally, involved in the import of threonine and serine into the cell, with the concomitant import of a proton (symport system). The chain is Threonine/serine transporter TdcC from Shigella boydii serotype 18 (strain CDC 3083-94 / BS512).